The following is a 249-amino-acid chain: uncharacterized protein (249 aa).

The signal sequence occupies residues 1–20 (MSNQNKVLSLGLLLLAAVAA).

The protein belongs to the IIV-6 117L family.

This is an uncharacterized protein from Acheta domesticus (House cricket).